The chain runs to 788 residues: Endonuclease MutS2 (788 aa).

335-342 (GPNTGGKT) contributes to the ATP binding site. Residues 688–708 (VKSASKTKKRSGGTSITKQSA) are disordered. Over residues 699–708 (GGTSITKQSA) the composition is skewed to polar residues. A Smr domain is found at 713–788 (LDLRGVRVEE…GHGVTIIELK (76 aa)).

The protein belongs to the DNA mismatch repair MutS family. MutS2 subfamily. As to quaternary structure, homodimer. Binds to stalled ribosomes, contacting rRNA.

Functionally, endonuclease that is involved in the suppression of homologous recombination and thus may have a key role in the control of bacterial genetic diversity. In terms of biological role, acts as a ribosome collision sensor, splitting the ribosome into its 2 subunits. Detects stalled/collided 70S ribosomes which it binds and splits by an ATP-hydrolysis driven conformational change. Acts upstream of the ribosome quality control system (RQC), a ribosome-associated complex that mediates the extraction of incompletely synthesized nascent chains from stalled ribosomes and their subsequent degradation. Probably generates substrates for RQC. The protein is Endonuclease MutS2 of Exiguobacterium sibiricum (strain DSM 17290 / CCUG 55495 / CIP 109462 / JCM 13490 / 255-15).